Consider the following 122-residue polypeptide: Small ribosomal subunit protein uS13 (122 aa).

Residues 95 to 122 form a disordered region; that stretch reads GLPVRGQRTHTNARTRKGKAKPIAGKKK.

It belongs to the universal ribosomal protein uS13 family. In terms of assembly, part of the 30S ribosomal subunit. Forms a loose heterodimer with protein S19. Forms two bridges to the 50S subunit in the 70S ribosome.

In terms of biological role, located at the top of the head of the 30S subunit, it contacts several helices of the 16S rRNA. In the 70S ribosome it contacts the 23S rRNA (bridge B1a) and protein L5 of the 50S subunit (bridge B1b), connecting the 2 subunits; these bridges are implicated in subunit movement. Contacts the tRNAs in the A and P-sites. In Sphingopyxis alaskensis (strain DSM 13593 / LMG 18877 / RB2256) (Sphingomonas alaskensis), this protein is Small ribosomal subunit protein uS13.